The primary structure comprises 262 residues: pFDCC methylesterase MES16 (262 aa).

The active-site Acyl-ester intermediate is Ser-87. Residues Asp-211 and His-239 each act as charge relay system in the active site.

Belongs to the AB hydrolase superfamily. Methylesterase family.

It is found in the cytoplasm. It carries out the reaction methyl (indol-3-yl)acetate + H2O = (indol-3-yl)acetate + methanol + H(+). The catalysed reaction is methyl (-)-jasmonate + H2O = jasmonate + methanol + H(+). It catalyses the reaction primary fluorescent dioxobilin-type chlorophyll catabolite + H2O = O13(4)-desmethyl pFDCC + methanol + H(+). It participates in plant hormone biosynthesis. The protein operates within lipid metabolism; oxylipin biosynthesis. Its pathway is porphyrin-containing compound metabolism; chlorophyll degradation. Its function is as follows. Involved in the chlorophyll breakdown by its action in fluorescent chlorophyll catabolites (FCCs) demethylation. Demethylates the C13(2)-carboxymethyl group present at the isocyclic ring of chlorophyll. Uses primary fluorescent dioxobilin-type chlorophyll catabolite (pFDCC) as substrate to produce O13(4)-desmethyl pFDCC. Also able to catalyze pheophorbides in vitro. Methylesterase shown to have carboxylesterase activity, methyl indole-3-acetic acid (MeIAA) esterase activity and methyl jasmonate (MeJA) esterase activity in vitro. The chain is pFDCC methylesterase MES16 from Arabidopsis thaliana (Mouse-ear cress).